Reading from the N-terminus, the 248-residue chain is Triosephosphate isomerase (248 aa).

Positions 11 and 13 each coordinate substrate. His95 acts as the Electrophile in catalysis. The active-site Proton acceptor is the Glu165.

This sequence belongs to the triosephosphate isomerase family. Homodimer.

The protein localises to the cytoplasm. It carries out the reaction dihydroxyacetone phosphate = methylglyoxal + phosphate. It catalyses the reaction D-glyceraldehyde 3-phosphate = dihydroxyacetone phosphate. The protein operates within carbohydrate degradation; glycolysis; D-glyceraldehyde 3-phosphate from glycerone phosphate: step 1/1. Its pathway is carbohydrate biosynthesis; gluconeogenesis. Functionally, triosephosphate isomerase is an extremely efficient metabolic enzyme that catalyzes the interconversion between dihydroxyacetone phosphate (DHAP) and D-glyceraldehyde-3-phosphate (G3P) in glycolysis and gluconeogenesis. In terms of biological role, it is also responsible for the non-negligible production of methylglyoxal a reactive cytotoxic side-product that modifies and can alter proteins, DNA and lipids. The sequence is that of Triosephosphate isomerase (tpi1) from Xenopus laevis (African clawed frog).